The following is a 66-amino-acid chain: Large ribosomal subunit protein bL33c (66 aa).

It belongs to the bacterial ribosomal protein bL33 family.

It localises to the plastid. It is found in the chloroplast. This is Large ribosomal subunit protein bL33c from Physcomitrium patens (Spreading-leaved earth moss).